Here is a 478-residue protein sequence, read N- to C-terminus: Ribulose bisphosphate carboxylase large chain (478 aa).

The propeptide occupies methionine 1 to serine 2. N-acetylproline is present on proline 3. Lysine 14 is subject to N6,N6,N6-trimethyllysine. Residues asparagine 123 and threonine 173 each contribute to the substrate site. The Proton acceptor role is filled by lysine 175. Lysine 177 serves as a coordination point for substrate. Residues lysine 201, aspartate 203, and glutamate 204 each coordinate Mg(2+). Residue lysine 201 is modified to N6-carboxylysine. The active-site Proton acceptor is the histidine 294. Substrate contacts are provided by arginine 295, histidine 327, and serine 379.

Belongs to the RuBisCO large chain family. Type I subfamily. In terms of assembly, heterohexadecamer of 8 large chains and 8 small chains; disulfide-linked. The disulfide link is formed within the large subunit homodimers. It depends on Mg(2+) as a cofactor. Post-translationally, the disulfide bond which can form in the large chain dimeric partners within the hexadecamer appears to be associated with oxidative stress and protein turnover.

It is found in the plastid. The protein resides in the chloroplast. The enzyme catalyses 2 (2R)-3-phosphoglycerate + 2 H(+) = D-ribulose 1,5-bisphosphate + CO2 + H2O. The catalysed reaction is D-ribulose 1,5-bisphosphate + O2 = 2-phosphoglycolate + (2R)-3-phosphoglycerate + 2 H(+). Functionally, ruBisCO catalyzes two reactions: the carboxylation of D-ribulose 1,5-bisphosphate, the primary event in carbon dioxide fixation, as well as the oxidative fragmentation of the pentose substrate in the photorespiration process. Both reactions occur simultaneously and in competition at the same active site. The polypeptide is Ribulose bisphosphate carboxylase large chain (Neurachne munroi).